Reading from the N-terminus, the 115-residue chain is MNLMLTLLTNTLLASLLVLIAFWLPQLNIYAEKTSPYECGFDPMGSARLPFSMKFFLVAITFLLFDLEIALLLPLPWASQTTNLNTMLIMALVLISLLAISLAYEWTQKGLEWTE.

3 helical membrane passes run 3–23, 55–75, and 84–104; these read LMLT…IAFW, FFLV…LLPL, and LNTM…SLAY.

This sequence belongs to the complex I subunit 3 family. As to quaternary structure, core subunit of respiratory chain NADH dehydrogenase (Complex I) which is composed of 45 different subunits. Interacts with TMEM186. Interacts with TMEM242.

The protein localises to the mitochondrion inner membrane. It carries out the reaction a ubiquinone + NADH + 5 H(+)(in) = a ubiquinol + NAD(+) + 4 H(+)(out). Its function is as follows. Core subunit of the mitochondrial membrane respiratory chain NADH dehydrogenase (Complex I) which catalyzes electron transfer from NADH through the respiratory chain, using ubiquinone as an electron acceptor. Essential for the catalytic activity of complex I. The protein is NADH-ubiquinone oxidoreductase chain 3 of Equus caballus (Horse).